Consider the following 217-residue polypeptide: Large ribosomal subunit protein uL1 (217 aa).

This sequence belongs to the universal ribosomal protein uL1 family. In terms of assembly, part of the 50S ribosomal subunit.

Binds directly to 23S rRNA. Probably involved in E site tRNA release. Its function is as follows. Protein L1 is also a translational repressor protein, it controls the translation of its operon by binding to its mRNA. The chain is Large ribosomal subunit protein uL1 from Thermoplasma volcanium (strain ATCC 51530 / DSM 4299 / JCM 9571 / NBRC 15438 / GSS1).